The primary structure comprises 63 residues: Actiflagelin (63 aa).

Intrachain disulfides connect C3/C24, C6/C11, C17/C39, C43/C55, and C56/C61. P63 carries the post-translational modification Proline amide.

Contains 5 disulfide bonds. In terms of tissue distribution, expressed by the venom gland.

The protein resides in the secreted. Its function is as follows. Unknown. In vitro, this toxin activates sperm motility when tested on OF1 male mice. In Walterinnesia aegyptia (Desert black snake), this protein is Actiflagelin.